A 273-amino-acid polypeptide reads, in one-letter code: MAIVKCKPTSAGRRHVVKIVNPELHKGKPYAPLLGTKSKTGGRNNLGRITTRHIGGGHKQHYRVIDFKRNKLDIPAVVERLEYDPNRSANIALVLYKDGERRYILAPKGLSAGDQIQSGINAPIKIGNSLPMRNIPVGSTVHNVELKPGKGGQIARSAGAYVQIIAREGNYVTLRLRSGEMRKVLSECVATIGEVGNSEHMLRVLGKAGANRWRGVRPTVRGTAMNPVDHPHGGGEGRNFGKHPVTPWGVQTKGKKTRHNKRTDKYIVRRRGK.

Residues 221 to 263 are disordered; sequence RGTAMNPVDHPHGGGEGRNFGKHPVTPWGVQTKGKKTRHNKRT. Residues 253 to 263 show a composition bias toward basic residues; that stretch reads KGKKTRHNKRT.

The protein belongs to the universal ribosomal protein uL2 family. In terms of assembly, part of the 50S ribosomal subunit. Forms a bridge to the 30S subunit in the 70S ribosome.

One of the primary rRNA binding proteins. Required for association of the 30S and 50S subunits to form the 70S ribosome, for tRNA binding and peptide bond formation. It has been suggested to have peptidyltransferase activity; this is somewhat controversial. Makes several contacts with the 16S rRNA in the 70S ribosome. This is Large ribosomal subunit protein uL2 from Histophilus somni (strain 2336) (Haemophilus somnus).